The chain runs to 356 residues: DNA polymerase IV (356 aa).

The 182-residue stretch at 6–187 folds into the UmuC domain; that stretch reads IIHIDMDAFY…QPIRRLHGVG (182 aa). Positions 10 and 105 each coordinate Mg(2+). Residue Glu-106 is part of the active site.

This sequence belongs to the DNA polymerase type-Y family. Monomer. It depends on Mg(2+) as a cofactor.

The protein localises to the cytoplasm. It catalyses the reaction DNA(n) + a 2'-deoxyribonucleoside 5'-triphosphate = DNA(n+1) + diphosphate. Its function is as follows. Poorly processive, error-prone DNA polymerase involved in untargeted mutagenesis. Copies undamaged DNA at stalled replication forks, which arise in vivo from mismatched or misaligned primer ends. These misaligned primers can be extended by PolIV. Exhibits no 3'-5' exonuclease (proofreading) activity. May be involved in translesional synthesis, in conjunction with the beta clamp from PolIII. The chain is DNA polymerase IV from Halorhodospira halophila (strain DSM 244 / SL1) (Ectothiorhodospira halophila (strain DSM 244 / SL1)).